A 245-amino-acid chain; its full sequence is 1-(5-phosphoribosyl)-5-[(5-phosphoribosylamino)methylideneamino] imidazole-4-carboxamide isomerase (245 aa).

The Proton acceptor role is filled by Asp8. Asp130 (proton donor) is an active-site residue.

The protein belongs to the HisA/HisF family.

It localises to the cytoplasm. It carries out the reaction 1-(5-phospho-beta-D-ribosyl)-5-[(5-phospho-beta-D-ribosylamino)methylideneamino]imidazole-4-carboxamide = 5-[(5-phospho-1-deoxy-D-ribulos-1-ylimino)methylamino]-1-(5-phospho-beta-D-ribosyl)imidazole-4-carboxamide. Its pathway is amino-acid biosynthesis; L-histidine biosynthesis; L-histidine from 5-phospho-alpha-D-ribose 1-diphosphate: step 4/9. The sequence is that of 1-(5-phosphoribosyl)-5-[(5-phosphoribosylamino)methylideneamino] imidazole-4-carboxamide isomerase from Pseudomonas savastanoi pv. phaseolicola (strain 1448A / Race 6) (Pseudomonas syringae pv. phaseolicola (strain 1448A / Race 6)).